We begin with the raw amino-acid sequence, 248 residues long: 3-oxoacyl-[acyl-carrier-protein] reductase FabG (248 aa).

Residues 14–17, 65–66, and N92 each bind NADP(+); these read GGSR and DV. S144 is a binding site for substrate. Y157 serves as the catalytic Proton acceptor. NADP(+) is bound by residues 157-161 and I190; that span reads YAAAK.

The protein belongs to the short-chain dehydrogenases/reductases (SDR) family. Homotetramer.

It carries out the reaction a (3R)-hydroxyacyl-[ACP] + NADP(+) = a 3-oxoacyl-[ACP] + NADPH + H(+). Its pathway is lipid metabolism; fatty acid biosynthesis. Catalyzes the NADPH-dependent reduction of beta-ketoacyl-ACP substrates to beta-hydroxyacyl-ACP products, the first reductive step in the elongation cycle of fatty acid biosynthesis. The protein is 3-oxoacyl-[acyl-carrier-protein] reductase FabG (fabG) of Chlamydia muridarum (strain MoPn / Nigg).